The chain runs to 325 residues: TNFAIP3-interacting protein 3 (325 aa).

2 disordered regions span residues 1 to 30 and 84 to 129; these read MAHFVQGTSRMIAAESSTEHKECAEPSTRK and RFLS…RLNE. Over residues 17-28 the composition is skewed to basic and acidic residues; the sequence is STEHKECAEPST. Positions 27–265 form a coiled coil; the sequence is STRKNLMNSL…LEKQLKQMYC (239 aa). The ubiquitin-binding domain (UBD) stretch occupies residues 190-248; it reads HEEMRTEMEVLKQQVQIYEEDFKKERSDRERLNQEKEELQQINETSQSQLNRLNSQIKA.

In terms of assembly, interacts with TNFAIP3. Interacts with polyubiquitin. In terms of tissue distribution, highly expressed in lung, lymph node, thymus and fetal liver. Expressed at lower levels in bone marrow, brain, kidney, spleen, leukocytes and tonsils. Could be detected in heart, salivary gland, adrenal gland, pancreas, ovary and fetal brain. High levels detected in liver, colon, small intestine, muscle, stomach, testis, placenta, thyroid, uterus, prostate, skin and PBL.

In terms of biological role, binds to zinc finger protein TNFAIP3 and inhibits NF-kappa-B activation induced by tumor necrosis factor, Toll-like receptor 4 (TLR4), interleukin-1 and 12-O-tetradecanoylphorbol-13-acetate. Overexpression inhibits NF-kappa-B-dependent gene expression in response to lipopolysaccharide at a level downstream of TRAF6 and upstream of IKBKB. NF-kappa-B inhibition is independent of TNFAIP3 binding. The sequence is that of TNFAIP3-interacting protein 3 from Homo sapiens (Human).